A 367-amino-acid polypeptide reads, in one-letter code: Methylthioribose-1-phosphate isomerase (367 aa).

Asp250 functions as the Proton donor in the catalytic mechanism.

The protein belongs to the eIF-2B alpha/beta/delta subunits family. MtnA subfamily.

It localises to the cytoplasm. The protein localises to the nucleus. The enzyme catalyses 5-(methylsulfanyl)-alpha-D-ribose 1-phosphate = 5-(methylsulfanyl)-D-ribulose 1-phosphate. The protein operates within amino-acid biosynthesis; L-methionine biosynthesis via salvage pathway; L-methionine from S-methyl-5-thio-alpha-D-ribose 1-phosphate: step 1/6. Catalyzes the interconversion of methylthioribose-1-phosphate (MTR-1-P) into methylthioribulose-1-phosphate (MTRu-1-P). This is Methylthioribose-1-phosphate isomerase (IDI2) from Zea mays (Maize).